The sequence spans 251 residues: 5'-nucleotidase SurE 1 (251 aa).

Residues Asp-8, Asp-9, Ser-39, and Asn-95 each contribute to the a divalent metal cation site.

The protein belongs to the SurE nucleotidase family. A divalent metal cation serves as cofactor.

The protein localises to the cytoplasm. The catalysed reaction is a ribonucleoside 5'-phosphate + H2O = a ribonucleoside + phosphate. In terms of biological role, nucleotidase that shows phosphatase activity on nucleoside 5'-monophosphates. This is 5'-nucleotidase SurE 1 from Thermus thermophilus (strain ATCC BAA-163 / DSM 7039 / HB27).